The following is a 469-amino-acid chain: Swarming motility regulation sensor protein RssA (469 aa).

2 helical membrane-spanning segments follow: residues 12 to 32 (IIFQVLAILLLWGLLVAWVKY) and 167 to 187 (VPLLGILAAIIVTLLFTAYFS). One can recognise a Histidine kinase domain in the interval 245 to 459 (DAAHELRTPI…GFIIDLPESY (215 aa)). A Phosphohistidine; by autocatalysis modification is found at histidine 248.

The protein localises to the cell inner membrane. The enzyme catalyses ATP + protein L-histidine = ADP + protein N-phospho-L-histidine.. Functionally, member of the two-component regulatory system RssA/RssB involved in regulation of swarming motility which has been shown to be inhibited by saturated fatty acids. RssA/RssB regulates cellular fatty acid composition, hemolysin production and cell surface topography. RssA/RssB negatively regulates the activity of SlhBA. It can also act as a negative regulator for the control of the swarming initiation. The polypeptide is Swarming motility regulation sensor protein RssA (rssA) (Serratia marcescens).